We begin with the raw amino-acid sequence, 406 residues long: Imidazolonepropionase (406 aa).

Residues His75 and His77 each contribute to the Fe(3+) site. The Zn(2+) site is built by His75 and His77. Arg84, Tyr147, and His180 together coordinate 4-imidazolone-5-propanoate. An N-formimidoyl-L-glutamate-binding site is contributed by Tyr147. His245 is a binding site for Fe(3+). His245 serves as a coordination point for Zn(2+). 4-imidazolone-5-propanoate is bound at residue Gln248. Fe(3+) is bound at residue Asp320. Asp320 is a Zn(2+) binding site. The N-formimidoyl-L-glutamate site is built by Asn322 and Gly324. Residue Thr325 coordinates 4-imidazolone-5-propanoate.

Belongs to the metallo-dependent hydrolases superfamily. HutI family. Requires Zn(2+) as cofactor. Fe(3+) is required as a cofactor.

It is found in the cytoplasm. The catalysed reaction is 4-imidazolone-5-propanoate + H2O = N-formimidoyl-L-glutamate. Its pathway is amino-acid degradation; L-histidine degradation into L-glutamate; N-formimidoyl-L-glutamate from L-histidine: step 3/3. Functionally, catalyzes the hydrolytic cleavage of the carbon-nitrogen bond in imidazolone-5-propanoate to yield N-formimidoyl-L-glutamate. It is the third step in the universal histidine degradation pathway. This is Imidazolonepropionase from Hyphomonas neptunium (strain ATCC 15444).